Consider the following 459-residue polypeptide: Bifunctional protein GlmU (459 aa).

The interval 1 to 230 is pyrophosphorylase; sequence MSNRFAVILA…FDETLGVNDR (230 aa). UDP-N-acetyl-alpha-D-glucosamine is bound by residues 9–12, K23, Q73, and 78–79; these read LAAG and GT. Position 103 (D103) interacts with Mg(2+). UDP-N-acetyl-alpha-D-glucosamine-binding residues include G140, E155, N170, and N228. N228 contributes to the Mg(2+) binding site. The interval 231–251 is linker; that stretch reads VALSQAEIIMKNRINRKNMVN. The interval 252 to 459 is N-acetyltransferase; the sequence is GVTIIDPSNT…VDQLLNKKKS (208 aa). Residues R333 and K351 each contribute to the UDP-N-acetyl-alpha-D-glucosamine site. Catalysis depends on H363, which acts as the Proton acceptor. Y366 and N377 together coordinate UDP-N-acetyl-alpha-D-glucosamine. Acetyl-CoA contacts are provided by residues 386 to 387, A423, and R440; that span reads NY.

It in the N-terminal section; belongs to the N-acetylglucosamine-1-phosphate uridyltransferase family. This sequence in the C-terminal section; belongs to the transferase hexapeptide repeat family. In terms of assembly, homotrimer. It depends on Mg(2+) as a cofactor.

The protein localises to the cytoplasm. It catalyses the reaction alpha-D-glucosamine 1-phosphate + acetyl-CoA = N-acetyl-alpha-D-glucosamine 1-phosphate + CoA + H(+). The enzyme catalyses N-acetyl-alpha-D-glucosamine 1-phosphate + UTP + H(+) = UDP-N-acetyl-alpha-D-glucosamine + diphosphate. It functions in the pathway nucleotide-sugar biosynthesis; UDP-N-acetyl-alpha-D-glucosamine biosynthesis; N-acetyl-alpha-D-glucosamine 1-phosphate from alpha-D-glucosamine 6-phosphate (route II): step 2/2. It participates in nucleotide-sugar biosynthesis; UDP-N-acetyl-alpha-D-glucosamine biosynthesis; UDP-N-acetyl-alpha-D-glucosamine from N-acetyl-alpha-D-glucosamine 1-phosphate: step 1/1. Its pathway is bacterial outer membrane biogenesis; LPS lipid A biosynthesis. Its function is as follows. Catalyzes the last two sequential reactions in the de novo biosynthetic pathway for UDP-N-acetylglucosamine (UDP-GlcNAc). The C-terminal domain catalyzes the transfer of acetyl group from acetyl coenzyme A to glucosamine-1-phosphate (GlcN-1-P) to produce N-acetylglucosamine-1-phosphate (GlcNAc-1-P), which is converted into UDP-GlcNAc by the transfer of uridine 5-monophosphate (from uridine 5-triphosphate), a reaction catalyzed by the N-terminal domain. The chain is Bifunctional protein GlmU from Bacillus anthracis (strain A0248).